The primary structure comprises 1377 residues: DNA-directed RNA polymerase subunit beta (1377 aa).

Belongs to the RNA polymerase beta chain family. In terms of assembly, the RNAP catalytic core consists of 2 alpha, 1 beta, 1 beta' and 1 omega subunit. When a sigma factor is associated with the core the holoenzyme is formed, which can initiate transcription.

It carries out the reaction RNA(n) + a ribonucleoside 5'-triphosphate = RNA(n+1) + diphosphate. Functionally, DNA-dependent RNA polymerase catalyzes the transcription of DNA into RNA using the four ribonucleoside triphosphates as substrates. This chain is DNA-directed RNA polymerase subunit beta, found in Azoarcus sp. (strain BH72).